A 96-amino-acid chain; its full sequence is NADH-quinone oxidoreductase subunit K (96 aa).

Transmembrane regions (helical) follow at residues 1–21 (MNYI…VLVR), 25–45 (IIVF…FVAF), and 56–76 (VIAF…LAII).

The protein belongs to the complex I subunit 4L family. NDH-1 is composed of 14 different subunits. Subunits NuoA, H, J, K, L, M, N constitute the membrane sector of the complex.

It is found in the cell membrane. It carries out the reaction a quinone + NADH + 5 H(+)(in) = a quinol + NAD(+) + 4 H(+)(out). In terms of biological role, NDH-1 shuttles electrons from NADH, via FMN and iron-sulfur (Fe-S) centers, to quinones in the respiratory chain. The immediate electron acceptor for the enzyme in this species is believed to be a menaquinone. Couples the redox reaction to proton translocation (for every two electrons transferred, four hydrogen ions are translocated across the cytoplasmic membrane), and thus conserves the redox energy in a proton gradient. The protein is NADH-quinone oxidoreductase subunit K of Thermobifida fusca (strain YX).